The following is a 309-amino-acid chain: Homoserine kinase (309 aa).

91–101 (PIGSGLGSSAC) contributes to the ATP binding site.

This sequence belongs to the GHMP kinase family. Homoserine kinase subfamily.

It localises to the cytoplasm. The catalysed reaction is L-homoserine + ATP = O-phospho-L-homoserine + ADP + H(+). Its pathway is amino-acid biosynthesis; L-threonine biosynthesis; L-threonine from L-aspartate: step 4/5. Functionally, catalyzes the ATP-dependent phosphorylation of L-homoserine to L-homoserine phosphate. In Salmonella paratyphi B (strain ATCC BAA-1250 / SPB7), this protein is Homoserine kinase.